The chain runs to 294 residues: Large ribosomal subunit protein uL18 (294 aa).

Residues 247–275 (RADPSPSAKKAAKPSKRHTAKRLTYDERK) form a disordered region. Over residues 256–267 (KAAKPSKRHTAK) the composition is skewed to basic residues.

The protein belongs to the universal ribosomal protein uL18 family. As to quaternary structure, component of the large ribosomal subunit (LSU).

The protein localises to the cytoplasm. Its subcellular location is the nucleus. Component of the ribosome, a large ribonucleoprotein complex responsible for the synthesis of proteins in the cell. The small ribosomal subunit (SSU) binds messenger RNAs (mRNAs) and translates the encoded message by selecting cognate aminoacyl-transfer RNA (tRNA) molecules. The large subunit (LSU) contains the ribosomal catalytic site termed the peptidyl transferase center (PTC), which catalyzes the formation of peptide bonds, thereby polymerizing the amino acids delivered by tRNAs into a polypeptide chain. The nascent polypeptides leave the ribosome through a tunnel in the LSU and interact with protein factors that function in enzymatic processing, targeting, and the membrane insertion of nascent chains at the exit of the ribosomal tunnel. The protein is Large ribosomal subunit protein uL18 (rpl-5) of Caenorhabditis briggsae.